A 1048-amino-acid chain; its full sequence is Probable beta-glucosidase E (1048 aa).

The segment at 1-54 (MPPPPFRDAPSSAKSSQRYTPLHESIPEELNDKQYSSDADSLPLSDPSDGEDDS) is disordered. Topologically, residues 1-150 (MPPPPFRDAP…WRTVYYSKYW (150 aa)) are cytoplasmic. Low complexity predominate over residues 36-47 (SSDADSLPLSDP). Residues 151–171 (WRALIGVVVVLVLLVLVFLGL) traverse the membrane as a helical; Signal-anchor for type II membrane protein segment. Over 172-1048 (ARSKQVGDEL…SRDLPLHGKY (877 aa)) the chain is Extracellular. N-linked (GlcNAc...) asparagine glycosylation is found at Asn-216, Asn-224, and Asn-410. Asp-438 is an active-site residue. Residues Asn-481, Asn-520, Asn-578, Asn-895, and Asn-991 are each glycosylated (N-linked (GlcNAc...) asparagine). Positions 508–527 (WERPPPDGEGGPNFSSWTDD) are disordered.

Belongs to the glycosyl hydrolase 3 family.

It is found in the cell membrane. It catalyses the reaction Hydrolysis of terminal, non-reducing beta-D-glucosyl residues with release of beta-D-glucose.. It participates in glycan metabolism; cellulose degradation. In terms of biological role, beta-glucosidases are one of a number of cellulolytic enzymes involved in the degradation of cellulosic biomass. Catalyzes the last step releasing glucose from the inhibitory cellobiose. This chain is Probable beta-glucosidase E (bglE), found in Aspergillus oryzae (strain ATCC 42149 / RIB 40) (Yellow koji mold).